The chain runs to 374 residues: Chaperone protein DnaJ (374 aa).

A J domain is found at 5-69 (NYYQILGVSK…QKRAAYDRLG (65 aa)). A CR-type zinc finger spans residues 137–215 (GIEKNISFSS…CHGMGRYHKQ (79 aa)). Zn(2+)-binding residues include Cys150, Cys153, Cys167, Cys170, Cys189, Cys192, Cys203, and Cys206. CXXCXGXG motif repeat units follow at residues 150-157 (CDTCHGSG), 167-174 (CDACSGVG), 189-196 (CHKCQGNG), and 203-210 (CKKCHGMG).

Belongs to the DnaJ family. In terms of assembly, homodimer. Zn(2+) serves as cofactor.

Its subcellular location is the cytoplasm. In terms of biological role, participates actively in the response to hyperosmotic and heat shock by preventing the aggregation of stress-denatured proteins and by disaggregating proteins, also in an autonomous, DnaK-independent fashion. Unfolded proteins bind initially to DnaJ; upon interaction with the DnaJ-bound protein, DnaK hydrolyzes its bound ATP, resulting in the formation of a stable complex. GrpE releases ADP from DnaK; ATP binding to DnaK triggers the release of the substrate protein, thus completing the reaction cycle. Several rounds of ATP-dependent interactions between DnaJ, DnaK and GrpE are required for fully efficient folding. Also involved, together with DnaK and GrpE, in the DNA replication of plasmids through activation of initiation proteins. The chain is Chaperone protein DnaJ from Rickettsia massiliae (strain Mtu5).